The sequence spans 305 residues: Probable 5-dehydro-4-deoxyglucarate dehydratase (305 aa).

The protein belongs to the DapA family.

The enzyme catalyses 5-dehydro-4-deoxy-D-glucarate + H(+) = 2,5-dioxopentanoate + CO2 + H2O. It functions in the pathway carbohydrate acid metabolism; D-glucarate degradation; 2,5-dioxopentanoate from D-glucarate: step 2/2. The chain is Probable 5-dehydro-4-deoxyglucarate dehydratase from Pseudomonas entomophila (strain L48).